We begin with the raw amino-acid sequence, 283 residues long: Tryptophan 2,3-dioxygenase (283 aa).

Residues 52-56, tyrosine 114, and arginine 118 contribute to the substrate site; that span reads FIIQH. Histidine 241 lines the heme pocket. Threonine 255 lines the substrate pocket.

It belongs to the tryptophan 2,3-dioxygenase family. In terms of assembly, homotetramer. Heme is required as a cofactor.

The catalysed reaction is L-tryptophan + O2 = N-formyl-L-kynurenine. It functions in the pathway amino-acid degradation; L-tryptophan degradation via kynurenine pathway; L-kynurenine from L-tryptophan: step 1/2. Heme-dependent dioxygenase that catalyzes the oxidative cleavage of the L-tryptophan (L-Trp) pyrrole ring and converts L-tryptophan to N-formyl-L-kynurenine. Catalyzes the oxidative cleavage of the indole moiety. In Pseudomonas fluorescens (strain ATCC BAA-477 / NRRL B-23932 / Pf-5), this protein is Tryptophan 2,3-dioxygenase.